We begin with the raw amino-acid sequence, 638 residues long: 1,4-alpha-glucan branching enzyme GlgB (638 aa).

The active-site Nucleophile is Asp-320. The Proton donor role is filled by Glu-373.

This sequence belongs to the glycosyl hydrolase 13 family. GlgB subfamily. As to quaternary structure, monomer.

The enzyme catalyses Transfers a segment of a (1-&gt;4)-alpha-D-glucan chain to a primary hydroxy group in a similar glucan chain.. It participates in glycan biosynthesis; glycogen biosynthesis. Catalyzes the formation of the alpha-1,6-glucosidic linkages in glycogen by scission of a 1,4-alpha-linked oligosaccharide from growing alpha-1,4-glucan chains and the subsequent attachment of the oligosaccharide to the alpha-1,6 position. This Oleidesulfovibrio alaskensis (strain ATCC BAA-1058 / DSM 17464 / G20) (Desulfovibrio alaskensis) protein is 1,4-alpha-glucan branching enzyme GlgB.